The following is a 225-amino-acid chain: DNA-binding response regulator MtrA (225 aa).

Residues 4 to 117 (RILVVDDDAS…ELVARVRARL (114 aa)) form the Response regulatory domain. Position 53 is a 4-aspartylphosphate (aspartate 53). Positions 125–224 (AEMLSIADVE…VRGVGYKAGP (100 aa)) form a DNA-binding region, ompR/PhoB-type.

Post-translationally, phosphorylated by MtrB.

In terms of biological role, member of the two-component regulatory system MtrA/MtrB. This chain is DNA-binding response regulator MtrA (mtrA), found in Mycolicibacterium paratuberculosis (strain ATCC BAA-968 / K-10) (Mycobacterium paratuberculosis).